Reading from the N-terminus, the 271-residue chain is Interleukin-1 alpha (271 aa).

The propeptide occupies Met1–Arg112. Lys82 is modified (N6-acetyllysine). Residues Lys82–Leu86 form a nuclear localization signal (NLS) region. Ser87 is subject to Phosphoserine. N-linked (GlcNAc...) asparagine glycans are attached at residues Asn102, Asn121, Asn137, Asn141, and Asn211.

This sequence belongs to the IL-1 family. As to quaternary structure, monomer. Interacts with TMED10; the interaction mediates the translocation from the cytoplasm into the ERGIC (endoplasmic reticulum-Golgi intermediate compartment) and thereby secretion. Interacts with IL1R1. Interacts with S100A13; this interaction is the first step in the export of IL1A, followed by direct translocation of this complex across the plasma membrane. In terms of processing, acetylated within its nuclear localization sequence, which impacts subcellular localization. Proteolytic processed by CAPN1 in a calcium-dependent manner. Cleavage from 31 kDa precursor to 18 kDa biologically active molecules. Post-translationally, phosphorylated. Phosphorylation greatly enhances susceptibility to digestion and promotes the conversion of pre-IL1A alpha to the biologically active IL1A.

The protein localises to the nucleus. It is found in the cytoplasm. It localises to the secreted. Functionally, cytokine constitutively present intracellularly in nearly all resting non-hematopoietic cells that plays an important role in inflammation and bridges the innate and adaptive immune systems. After binding to its receptor IL1R1 together with its accessory protein IL1RAP, forms the high affinity interleukin-1 receptor complex. Signaling involves the recruitment of adapter molecules such as MYD88, IRAK1 or IRAK4. In turn, mediates the activation of NF-kappa-B and the three MAPK pathways p38, p42/p44 and JNK pathways. Within the cell, acts as an alarmin and cell death results in its liberation in the extracellular space after disruption of the cell membrane to induce inflammation and alert the host to injury or damage. In addition to its role as a danger signal, which occurs when the cytokine is passively released by cell necrosis, directly senses DNA damage and acts as signal for genotoxic stress without loss of cell integrity. This is Interleukin-1 alpha (IL1A) from Macaca mulatta (Rhesus macaque).